The chain runs to 445 residues: Trigger factor (445 aa).

In terms of domain architecture, PPIase FKBP-type spans 162-247 (GDQVTIDAIG…IKAVHTAEPT (86 aa)).

This sequence belongs to the FKBP-type PPIase family. Tig subfamily.

The protein resides in the cytoplasm. The catalysed reaction is [protein]-peptidylproline (omega=180) = [protein]-peptidylproline (omega=0). Involved in protein export. Acts as a chaperone by maintaining the newly synthesized protein in an open conformation. Functions as a peptidyl-prolyl cis-trans isomerase. The polypeptide is Trigger factor (Rickettsia africae (strain ESF-5)).